The sequence spans 557 residues: Probable asparagine synthetase [glutamine-hydrolyzing] (557 aa).

The active-site For GATase activity is C2. The Glutamine amidotransferase type-2 domain occupies 2 to 188 (CGILAVHHVA…PGHYYDSETK (187 aa)). Residues 50–54 (RLAIV), 75–77 (NGE), and D99 each bind L-glutamine. One can recognise an Asparagine synthetase domain in the interval 196–531 (PSWWDENKIP…PRQCADTVMR (336 aa)). Residues L235, I280, and 354-355 (SG) contribute to the ATP site. S391 and S489 each carry phosphoserine.

Its subcellular location is the cytoplasm. It is found in the nucleus. It catalyses the reaction L-aspartate + L-glutamine + ATP + H2O = L-asparagine + L-glutamate + AMP + diphosphate + H(+). Its pathway is amino-acid biosynthesis; L-asparagine biosynthesis; L-asparagine from L-aspartate (L-Gln route): step 1/1. The polypeptide is Probable asparagine synthetase [glutamine-hydrolyzing] (asn1) (Schizosaccharomyces pombe (strain 972 / ATCC 24843) (Fission yeast)).